Consider the following 253-residue polypeptide: Probable transcriptional regulatory protein A1G_04400 (253 aa).

Residues 1–21 form a disordered region; sequence MAGHSKFKNIQHRKGAQDKKR.

This sequence belongs to the TACO1 family.

The protein resides in the cytoplasm. The chain is Probable transcriptional regulatory protein A1G_04400 from Rickettsia rickettsii (strain Sheila Smith).